Here is a 1052-residue protein sequence, read N- to C-terminus: SWI/SNF-related matrix-associated actin-dependent regulator of chromatin subfamily A member 5 (1052 aa).

Residues 1 to 15 (MSSAAEPPPPPPPES) are compositionally biased toward pro residues. Residues 1–83 (MSSAAEPPPP…QEPDPTYEEK (83 aa)) form a disordered region. N-acetylserine is present on serine 2. A compositionally biased stretch (low complexity) spans 16–55 (APSKPAASIASGGSNSSNKGGPEGVAAQAVASAASAGPAD). Serine 66 is subject to Phosphoserine. The span at 69–83 (KQKEIQEPDPTYEEK) shows a compositional bias: basic and acidic residues. Residue lysine 83 forms a Glycyl lysine isopeptide (Lys-Gly) (interchain with G-Cter in SUMO2) linkage. Position 113 is a phosphothreonine (threonine 113). 3 positions are modified to phosphoserine: serine 116, serine 137, and serine 171. One can recognise a Helicase ATP-binding domain in the interval 192–357 (ISLYENGING…WSLLNFLLPD (166 aa)). 205–212 (DEMGLGKT) lines the ATP pocket. Residues 308 to 311 (DEAH) carry the DEAH box motif. Position 440 is an N6-acetyllysine (lysine 440). The Helicase C-terminal domain maps to 487 to 638 (VLDKLLPKLK…SIVIQQGRLV (152 aa)). Glycyl lysine isopeptide (Lys-Gly) (interchain with G-Cter in SUMO2) cross-links involve residues lysine 644, lysine 647, lysine 694, lysine 722, and lysine 735. Phosphoserine is present on residues serine 755 and serine 825. 2 SANT domains span residues 840 to 892 (QGFT…ERCN) and 943 to 1007 (KGKN…LITL). Lysine 966 participates in a covalent cross-link: Glycyl lysine isopeptide (Lys-Gly) (interchain with G-Cter in SUMO2). The tract at residues 1015–1052 (LEEKEKAEKKKRGPKPSTQKRKMDGAPDGRGRKKKLKL) is disordered. A compositionally biased stretch (basic residues) spans 1023–1034 (KKKRGPKPSTQK). Basic and acidic residues predominate over residues 1035–1044 (RKMDGAPDGR).

Belongs to the SNF2/RAD54 helicase family. ISWI subfamily. As to quaternary structure, component of the ACF-5 ISWI chromatin-remodeling complex (also called the ACF/WCRF complex) at least composed of SMARCA5/SNF2H and BAZ1A/ACF1, which regulates the spacing of histone octamers on the DNA template to facilitate access to DNA. Within the complex interacts with BAZ1A/ACF1; the interaction is direct and is required to slide nucleosomes from end to center positions on a DNA template in an ATP-dependent manner. Component of the CHRAC ISWI chromatin-remodeling complex at least composed of SMARCA5/SNF2H, BAZ1A/ACF1, CHRAC1 and POLE3; the complex preferentially binds DNA through the CHRAC1-POLE3 heterodimer and possesses ATP-dependent nucleosome-remodeling activity. Within the complex interacts with BAZ1A/ACF1; the interaction is direct and promotes the interaction with the POLE3-CHRAC1 heterodimer. Within the complex interacts with the POLE3-CHRAC1 heterodimer; the interaction is direct and enhances nucleosome sliding activity by the SMARCA5/SNF2H and BAZ1A/ACF1 interaction. Neither POLE3 nor CHRAC1 enhances nucleosome sliding activity of the ACF-5 ISWI chromatin remodeling complex. Component of the WICH-5 ISWI chromatin-remodeling complex (also called the WICH complex) at least composed of SMARCA5/SNF2H and BAZ1B/WSTF, which regulates the spacing of histone octamers on the DNA template to facilitate access to DNA. Within the complex interacts with BAZ1B/WSTF. Component of the NoRC-5 ISWI chromatin-remodeling complex (also called the NoRC chromatin-remodeling complex) at least composed of SMARCA5/SNF2H and BAZ2A/TIP5; the complex suppresses rDNA transcription by a combination of nucleosome remodeling, histone deacetylation, and DNA methylation. Within the complex interacts with BAZ2A/TIP5. Within the complex interacts with HDAC1. Component of the BRF-5 ISWI chromatin-remodeling complex at least composed of SMARCA5/SNF2H and BAZ2B. Within the complex interacts with BAZ2B. Component of the NURF-5 ISWI chromatin-remodeling complex at least composed of SMARCA5/SNF2H and BPTF. Within the complex interacts with BPFT. Component of the CERF-5 ISWI chromatin-remodeling complex at least composed of SMARCA5/SNF2H and CECR2. LUZP1 is detected as part of the CERF-5 complex in embryonic stem cells where it is involved in complex stabilization but is not detected in the complex in the testis. Within the complex interacts with CECR2. Component of the RSF-5 ISWI chromatin-remodeling complex (also called the RSF complex) at least composed of SMARCA5/SNF2H and RSF1. Within the complex interacts with RSF1. Interacts with the cohesin complex component RAD21; the interaction is direct. Interacts with the NuRD complex components HDAC2, RBBP4 and CHD4; the interactions are direct. Interacts with PCNA. Component of the B-WICH complex, at least composed of SMARCA5/SNF2H, BAZ1B/WSTF, SF3B1, DEK, MYO1C, ERCC6, MYBBP1A and DDX21 which positively regulates RNA polymerase III transcription. Interacts with MYO1C. Interacts with BEND3. Interacts with SIRT6; promoting recruitment to DNA damage sites. (Microbial infection) Interacts with JC virus small t antigen. In terms of assembly, (Microbial infection) Interacts with Epstein Barr virus (EBV) lytic switch protein BZLF1; this interaction participates to the activation of early lytic viral genes by BZLF1. In terms of tissue distribution, ubiquitously expressed.

It is found in the nucleus. It localises to the chromosome. It catalyses the reaction ATP + H2O = ADP + phosphate + H(+). Functionally, ATPase that possesses intrinsic ATP-dependent nucleosome-remodeling activity. Catalytic subunit of ISWI chromatin-remodeling complexes, which form ordered nucleosome arrays on chromatin and facilitate access to DNA during DNA-templated processes such as DNA replication, transcription, and repair; this may require intact histone H4 tails. Within the ISWI chromatin-remodeling complexes, slides edge- and center-positioned histone octamers away from their original location on the DNA template. Catalytic activity and histone octamer sliding propensity is regulated and determined by components of the ISWI chromatin-remodeling complexes. The BAZ1A/ACF1-, BAZ1B/WSTF-, BAZ2A/TIP5- and BAZ2B-containing ISWI chromatin-remodeling complexes regulate the spacing of nucleosomes along the chromatin and have the ability to slide mononucleosomes to the center of a DNA template in an ATP-dependent manner. The CECR2- and RSF1-containing ISWI chromatin-remodeling complexes do not have the ability to slide mononucleosomes to the center of a DNA template. Binds to core histones together with RSF1, and is required for the assembly of regular nucleosome arrays by the RSF-5 ISWI chromatin-remodeling complex. Involved in DNA replication and together with BAZ1A/ACF1 is required for replication of pericentric heterochromatin in S-phase. Probably plays a role in repression of RNA polymerase I dependent transcription of the rDNA locus, through the recruitment of the SIN3/HDAC1 corepressor complex to the rDNA promoter. Essential component of the WICH-5 ISWI chromatin-remodeling complex (also called the WICH complex), a chromatin-remodeling complex that mobilizes nucleosomes and reconfigures irregular chromatin to a regular nucleosomal array structure. The WICH-5 ISWI chromatin-remodeling complex regulates the transcription of various genes, has a role in RNA polymerase I transcription. Within the B-WICH complex has a role in RNA polymerase III transcription. Mediates the histone H2AX phosphorylation at 'Tyr-142', and is involved in the maintenance of chromatin structures during DNA replication processes. Essential component of NoRC-5 ISWI chromatin-remodeling complex, a complex that mediates silencing of a fraction of rDNA by recruiting histone-modifying enzymes and DNA methyltransferases, leading to heterochromatin formation and transcriptional silencing. This chain is SWI/SNF-related matrix-associated actin-dependent regulator of chromatin subfamily A member 5, found in Homo sapiens (Human).